The chain runs to 289 residues: 3-methyl-2-oxobutanoate hydroxymethyltransferase (289 aa).

Residues 1–10 (MSDSKSSAST) show a composition bias toward low complexity. Residues 1–33 (MSDSKSSASTSEDRLYGSAPSHDVPKRKTRTHH) are disordered. The Mg(2+) site is built by D70 and D109. 3-methyl-2-oxobutanoate-binding positions include 70–71 (DS), D109, and K139. E141 is a Mg(2+) binding site. The Proton acceptor role is filled by E207.

This sequence belongs to the PanB family. As to quaternary structure, homodecamer; pentamer of dimers. The cofactor is Mg(2+).

It localises to the cytoplasm. It carries out the reaction 3-methyl-2-oxobutanoate + (6R)-5,10-methylene-5,6,7,8-tetrahydrofolate + H2O = 2-dehydropantoate + (6S)-5,6,7,8-tetrahydrofolate. It functions in the pathway cofactor biosynthesis; (R)-pantothenate biosynthesis; (R)-pantoate from 3-methyl-2-oxobutanoate: step 1/2. In terms of biological role, catalyzes the reversible reaction in which hydroxymethyl group from 5,10-methylenetetrahydrofolate is transferred onto alpha-ketoisovalerate to form ketopantoate. In Rhodococcus jostii (strain RHA1), this protein is 3-methyl-2-oxobutanoate hydroxymethyltransferase.